Reading from the N-terminus, the 257-residue chain is RLA class II histocompatibility antigen, DP beta chain (257 aa).

Positions 1 to 29 are cleaved as a signal peptide; that stretch reads MRPCRSLRTAALAVVLTVLLHPVALGRAT. Residues 30–120 are beta-1; it reads PGESEQNYLW…LFQGLPVLLQ (91 aa). At 30–224 the chain is on the extracellular side; that stretch reads PGESEQNYLW…KAQSDSARSK (195 aa). Cystine bridges form between C45/C105 and C143/C199. N49 carries an N-linked (GlcNAc...) asparagine glycan. Residues 121–214 form a beta-2 region; that stretch reads TQPRVSVSPS…SLDSPITVEW (94 aa). One can recognise an Ig-like C1-type domain in the interval 123–211; sequence PRVSVSPSKK…EHPSLDSPIT (89 aa). The tract at residues 215 to 224 is connecting peptide; that stretch reads KAQSDSARSK. Residues 225–245 traverse the membrane as a helical segment; it reads MLAGVGGLVLGLVSLAVGVFM. Residues 246–257 are Cytoplasmic-facing; that stretch reads HRRSKKAQQGCR.

The protein belongs to the MHC class II family.

It localises to the membrane. In Oryctolagus cuniculus (Rabbit), this protein is RLA class II histocompatibility antigen, DP beta chain.